Reading from the N-terminus, the 1012-residue chain is Formate dehydrogenase 2 subunit alpha (cytochrome c-553) (1012 aa).

A signal peptide (tat-type signal) is located at residues 1–33 (MKTTRRSFLKLVGVSVVGLSLGQLGFDLEDAQA). Residues 43-99 (AKEVGTVCPFCSVCCQVIAYVRNGKLVSTEGDPDFPVNEGALCAKGAALFSMYTNPH) form the 4Fe-4S Mo/W bis-MGD-type domain. Positions 50, 53, 57, and 85 each coordinate [4Fe-4S] cluster. W-bis(molybdopterin guanine dinucleotide) is bound at residue U189. Residue U189 is a non-standard amino acid, selenocysteine. Ca(2+)-binding residues include T389, R391, K394, L424, and N426.

Belongs to the prokaryotic molybdopterin-containing oxidoreductase family. In terms of assembly, heterotrimer of cytochrome c3 FDH2C and formate dehydrogenase FDH2 alpha and beta subunits that forms the FdhABC(3) complex. The cofactor is [4Fe-4S] cluster. It depends on W-bis(molybdopterin guanine dinucleotide) as a cofactor. Post-translationally, predicted to be exported by the Tat system. The position of the signal peptide cleavage has not been experimentally proven.

Its subcellular location is the periplasm. The enzyme catalyses 2 Fe(III)-[cytochrome c553] + formate = 2 Fe(II)-[cytochrome c553] + CO2 + H(+). Functionally, alpha chain of the formate dehydrogenase (FDH) that catalyzes the reversible two-electron oxidation of formate to carbon dioxide. The alpha subunit of formate dehydrogenase forms the active site. The sequence is that of Formate dehydrogenase 2 subunit alpha (cytochrome c-553) from Nitratidesulfovibrio vulgaris (strain ATCC 29579 / DSM 644 / CCUG 34227 / NCIMB 8303 / VKM B-1760 / Hildenborough) (Desulfovibrio vulgaris).